Reading from the N-terminus, the 67-residue chain is Large ribosomal subunit protein uL29 (67 aa).

This sequence belongs to the universal ribosomal protein uL29 family.

The chain is Large ribosomal subunit protein uL29 from Exiguobacterium sibiricum (strain DSM 17290 / CCUG 55495 / CIP 109462 / JCM 13490 / 255-15).